The chain runs to 365 residues: NADH-quinone oxidoreductase subunit H 2 (365 aa).

8 helical membrane passes run 1–21 (MFVV…VVWA), 71–91 (LAPV…PFAP), 100–120 (VGVF…FLAG), 136–156 (IAQV…VVLI), 199–219 (FVSW…VFFI), 254–274 (ILFL…VVLF), 301–321 (IAGY…VVFL), and 342–362 (WKIL…WVVW).

This sequence belongs to the complex I subunit 1 family. As to quaternary structure, NDH-1 is composed of 14 different subunits. Subunits NuoA, H, J, K, L, M, N constitute the membrane sector of the complex.

It localises to the cell inner membrane. It carries out the reaction a quinone + NADH + 5 H(+)(in) = a quinol + NAD(+) + 4 H(+)(out). NDH-1 shuttles electrons from NADH, via FMN and iron-sulfur (Fe-S) centers, to quinones in the respiratory chain. The immediate electron acceptor for the enzyme in this species is believed to be ubiquinone. Couples the redox reaction to proton translocation (for every two electrons transferred, four hydrogen ions are translocated across the cytoplasmic membrane), and thus conserves the redox energy in a proton gradient. This subunit may bind ubiquinone. In Cytophaga hutchinsonii (strain ATCC 33406 / DSM 1761 / CIP 103989 / NBRC 15051 / NCIMB 9469 / D465), this protein is NADH-quinone oxidoreductase subunit H 2.